The primary structure comprises 86 residues: Large ribosomal subunit protein bL27 (86 aa).

Residues 1-10 (MAQKKGGGST) show a composition bias toward gly residues. The tract at residues 1 to 20 (MAQKKGGGSTRNGRDSESKR) is disordered.

The protein belongs to the bacterial ribosomal protein bL27 family.

The polypeptide is Large ribosomal subunit protein bL27 (Bordetella parapertussis (strain 12822 / ATCC BAA-587 / NCTC 13253)).